A 171-amino-acid polypeptide reads, in one-letter code: 3-hydroxydecanoyl-[acyl-carrier-protein] dehydratase (171 aa).

The active site involves His-71.

The protein belongs to the thioester dehydratase family. FabA subfamily. Homodimer.

Its subcellular location is the cytoplasm. The enzyme catalyses a (3R)-hydroxyacyl-[ACP] = a (2E)-enoyl-[ACP] + H2O. It carries out the reaction (3R)-hydroxydecanoyl-[ACP] = (2E)-decenoyl-[ACP] + H2O. The catalysed reaction is (2E)-decenoyl-[ACP] = (3Z)-decenoyl-[ACP]. It participates in lipid metabolism; fatty acid biosynthesis. In terms of biological role, necessary for the introduction of cis unsaturation into fatty acids. Catalyzes the dehydration of (3R)-3-hydroxydecanoyl-ACP to E-(2)-decenoyl-ACP and then its isomerization to Z-(3)-decenoyl-ACP. Can catalyze the dehydratase reaction for beta-hydroxyacyl-ACPs with saturated chain lengths up to 16:0, being most active on intermediate chain length. The polypeptide is 3-hydroxydecanoyl-[acyl-carrier-protein] dehydratase (Rhizobium meliloti (strain 1021) (Ensifer meliloti)).